The following is a 334-amino-acid chain: WD repeat domain 54 (334 aa).

3 WD repeats span residues Gly162–Thr206, Ile208–Gln247, and Ala250–Ser289.

Homodimer and homotrimer; forms tight forms of dimers and trimers. Interacts with IZUMO1 and IZUMO1R/JUNO. In terms of processing, cross-linked to tightly form both dimers and trimers by TGM2. Cross-linking enhances the activation of EGF receptor-mediated signaling pathway. Cross-linking is inhibited by EGF. Ubiquitinated. EGF increases ubiquitination. Widely expressed in the ovary and testis (at protein level).

It is found in the vesicle. The protein localises to the cytoplasm. Its subcellular location is the cell membrane. Plays a role in the adhesion and fusion of the sperm-oocyte membrane through its interactions with IZUMO1 and IZUMO1R/JUNO. When cross-linked to form dimers and trimers, it has a regulatory effect on ERK signaling pathway activity in response to EGF stimulation. Colocalizes with the EGF receptor in WDR54-specific vesicle where it sustains the internalization and controls the degradation of the EGF receptor after EGF stimulation. The protein is WD repeat domain 54 (Wdr54) of Rattus norvegicus (Rat).